Reading from the N-terminus, the 77-residue chain is Large ribosomal subunit protein uL29 (77 aa).

The protein belongs to the universal ribosomal protein uL29 family.

The chain is Large ribosomal subunit protein uL29 from Corynebacterium urealyticum (strain ATCC 43042 / DSM 7109).